Consider the following 502-residue polypeptide: Cysteine--tRNA ligase (502 aa).

Zn(2+) is bound at residue Cys30. The 'HIGH' region signature appears at 32-42 (PTIYDYAHIGN). Zn(2+) contacts are provided by Cys224, His263, and Glu267. Positions 296–300 (KMSKS) match the 'KMSKS' region motif. An ATP-binding site is contributed by Lys299.

It belongs to the class-I aminoacyl-tRNA synthetase family. Monomer. Zn(2+) serves as cofactor.

Its subcellular location is the cytoplasm. It carries out the reaction tRNA(Cys) + L-cysteine + ATP = L-cysteinyl-tRNA(Cys) + AMP + diphosphate. This chain is Cysteine--tRNA ligase, found in Bartonella quintana (strain Toulouse) (Rochalimaea quintana).